The chain runs to 190 residues: Pyridoxal 5'-phosphate synthase subunit PdxT (190 aa).

Position 46–48 (46–48 (GES)) interacts with L-glutamine. Catalysis depends on Cys78, which acts as the Nucleophile. L-glutamine contacts are provided by residues Arg108 and 137 to 138 (IR). Catalysis depends on charge relay system residues His174 and Glu176.

This sequence belongs to the glutaminase PdxT/SNO family. In the presence of PdxS, forms a dodecamer of heterodimers. Only shows activity in the heterodimer.

It carries out the reaction aldehydo-D-ribose 5-phosphate + D-glyceraldehyde 3-phosphate + L-glutamine = pyridoxal 5'-phosphate + L-glutamate + phosphate + 3 H2O + H(+). The enzyme catalyses L-glutamine + H2O = L-glutamate + NH4(+). It participates in cofactor biosynthesis; pyridoxal 5'-phosphate biosynthesis. Functionally, catalyzes the hydrolysis of glutamine to glutamate and ammonia as part of the biosynthesis of pyridoxal 5'-phosphate. The resulting ammonia molecule is channeled to the active site of PdxS. This Chloroflexus aggregans (strain MD-66 / DSM 9485) protein is Pyridoxal 5'-phosphate synthase subunit PdxT.